A 106-amino-acid polypeptide reads, in one-letter code: UPF0449 protein C19orf25 homolog (106 aa).

It belongs to the UPF0449 family.

This Xenopus tropicalis (Western clawed frog) protein is UPF0449 protein C19orf25 homolog.